We begin with the raw amino-acid sequence, 416 residues long: UDP-N-acetylglucosamine 1-carboxyvinyltransferase (416 aa).

22-23 (KN) contacts phosphoenolpyruvate. R91 contacts UDP-N-acetyl-alpha-D-glucosamine. C115 acts as the Proton donor in catalysis. C115 carries the 2-(S-cysteinyl)pyruvic acid O-phosphothioketal modification. Residues 120-124 (RPVDL), D303, and I325 each bind UDP-N-acetyl-alpha-D-glucosamine.

It belongs to the EPSP synthase family. MurA subfamily.

It localises to the cytoplasm. It carries out the reaction phosphoenolpyruvate + UDP-N-acetyl-alpha-D-glucosamine = UDP-N-acetyl-3-O-(1-carboxyvinyl)-alpha-D-glucosamine + phosphate. It functions in the pathway cell wall biogenesis; peptidoglycan biosynthesis. In terms of biological role, cell wall formation. Adds enolpyruvyl to UDP-N-acetylglucosamine. In Oleidesulfovibrio alaskensis (strain ATCC BAA-1058 / DSM 17464 / G20) (Desulfovibrio alaskensis), this protein is UDP-N-acetylglucosamine 1-carboxyvinyltransferase.